A 124-amino-acid chain; its full sequence is Small ribosomal subunit protein bS6 (124 aa).

Residues 99 to 124 are disordered; sequence PLPAPRVMPGSEAAQQQQAEAAASAD. Positions 109–124 are enriched in low complexity; sequence SEAAQQQQAEAAASAD.

The protein belongs to the bacterial ribosomal protein bS6 family.

Functionally, binds together with bS18 to 16S ribosomal RNA. This Synechococcus sp. (strain CC9605) protein is Small ribosomal subunit protein bS6.